Here is a 245-residue protein sequence, read N- to C-terminus: Ribonuclease PH (245 aa).

Phosphate contacts are provided by residues arginine 87 and 125–127 (GTR).

It belongs to the RNase PH family. As to quaternary structure, homohexameric ring arranged as a trimer of dimers.

It carries out the reaction tRNA(n+1) + phosphate = tRNA(n) + a ribonucleoside 5'-diphosphate. Its function is as follows. Phosphorolytic 3'-5' exoribonuclease that plays an important role in tRNA 3'-end maturation. Removes nucleotide residues following the 3'-CCA terminus of tRNAs; can also add nucleotides to the ends of RNA molecules by using nucleoside diphosphates as substrates, but this may not be physiologically important. Probably plays a role in initiation of 16S rRNA degradation (leading to ribosome degradation) during starvation. The protein is Ribonuclease PH of Streptomyces griseus subsp. griseus (strain JCM 4626 / CBS 651.72 / NBRC 13350 / KCC S-0626 / ISP 5235).